The primary structure comprises 146 residues: Protein archease (146 aa).

Ca(2+) contacts are provided by D16, D145, and I146.

It belongs to the archease family.

Its function is as follows. Activates the tRNA-splicing ligase complex by facilitating the enzymatic turnover of catalytic subunit RtcB. Acts by promoting the guanylylation of RtcB, a key intermediate step in tRNA ligation. Can also alter the NTP specificity of RtcB such that ATP, dGTP or ITP is used efficiently. In Methanosarcina mazei (strain ATCC BAA-159 / DSM 3647 / Goe1 / Go1 / JCM 11833 / OCM 88) (Methanosarcina frisia), this protein is Protein archease.